The chain runs to 205 residues: Peptidyl-tRNA hydrolase (205 aa).

Position 17 (tyrosine 17) interacts with tRNA. The active-site Proton acceptor is histidine 22. TRNA is bound by residues tyrosine 73 and asparagine 75.

It belongs to the PTH family. Monomer.

The protein localises to the cytoplasm. The catalysed reaction is an N-acyl-L-alpha-aminoacyl-tRNA + H2O = an N-acyl-L-amino acid + a tRNA + H(+). Functionally, hydrolyzes ribosome-free peptidyl-tRNAs (with 1 or more amino acids incorporated), which drop off the ribosome during protein synthesis, or as a result of ribosome stalling. Its function is as follows. Catalyzes the release of premature peptidyl moieties from peptidyl-tRNA molecules trapped in stalled 50S ribosomal subunits, and thus maintains levels of free tRNAs and 50S ribosomes. This Maridesulfovibrio salexigens (strain ATCC 14822 / DSM 2638 / NCIMB 8403 / VKM B-1763) (Desulfovibrio salexigens) protein is Peptidyl-tRNA hydrolase.